The primary structure comprises 544 residues: MAKDIKFSEEARRAMLRGVDALADAVKVTLGPKGRNVVLEKKFGSPLITNDGVTIAKEIELEDAFENMGAKLVAEVASKTNDVAGDGTTTATVLAQAMIREGLKNVTAGANPVGVRKGMEQAVTVAIENLKEISKPIEGKESIAQVAAISAADEEVGSLIAEAMERVGNDGVITIEESKGFTTELEVVEGMQFDRGYASPYMVTDSDKMEAVLDNPYILITDKKITNIQEILPVLEQVVQQGKPLLLIAEDVEGEALATLVVNKLRGTFNAVAVKAPGFGDRRKAMLEDISVLTGGEVITEDLGLDLKSTEIGQLGRASKVVVTKENTTIVEGAGDTEKIAARVNQIRAQVEETTSEFDREKLQERLAKLAGGVAVIKVGAATETELKERKLRIEDALNSTRAAVEEGIVSGGGTALVNVYNKVAAVEAEGDAQTGINIVLRALEEPIRQIAHNAGLEGSVIVERLKNEKIGVGFNAATGEWVNMIEKGIVDPTKVTRSALQNAASVAAMLLTTEAVVADKPEENAGGAGMPDMGGMGGMGGMM.

ATP-binding positions include 29–32 (TLGP), 86–90 (DGTTT), G413, 476–478 (NAA), and D492.

It belongs to the chaperonin (HSP60) family. As to quaternary structure, forms a cylinder of 14 subunits composed of two heptameric rings stacked back-to-back. Interacts with the co-chaperonin GroES.

The protein resides in the cytoplasm. The catalysed reaction is ATP + H2O + a folded polypeptide = ADP + phosphate + an unfolded polypeptide.. In terms of biological role, together with its co-chaperonin GroES, plays an essential role in assisting protein folding. The GroEL-GroES system forms a nano-cage that allows encapsulation of the non-native substrate proteins and provides a physical environment optimized to promote and accelerate protein folding. This is Chaperonin GroEL from Bacillus velezensis (strain DSM 23117 / BGSC 10A6 / LMG 26770 / FZB42) (Bacillus amyloliquefaciens subsp. plantarum).